Consider the following 70-residue polypeptide: Large ribosomal subunit protein bL33m (70 aa).

It belongs to the bacterial ribosomal protein bL33 family. Component of the mitochondrial large ribosomal subunit (mt-LSU). Mature yeast 74S mitochondrial ribosomes consist of a small (37S) and a large (54S) subunit. The 37S small subunit contains a 15S ribosomal RNA (15S mt-rRNA) and 34 different proteins. The 54S large subunit contains a 21S rRNA (21S mt-rRNA) and 46 different proteins. bL33m stabilizes the tRNA acceptor stem in the E-site.

The protein localises to the mitochondrion. Functionally, component of the mitochondrial ribosome (mitoribosome), a dedicated translation machinery responsible for the synthesis of mitochondrial genome-encoded proteins, including at least some of the essential transmembrane subunits of the mitochondrial respiratory chain. The mitoribosomes are attached to the mitochondrial inner membrane and translation products are cotranslationally integrated into the membrane. The chain is Large ribosomal subunit protein bL33m (MRPL39) from Saccharomyces cerevisiae (strain ATCC 204508 / S288c) (Baker's yeast).